The following is a 125-amino-acid chain: Large ribosomal subunit protein bL19 (125 aa).

It belongs to the bacterial ribosomal protein bL19 family.

Its function is as follows. This protein is located at the 30S-50S ribosomal subunit interface and may play a role in the structure and function of the aminoacyl-tRNA binding site. The chain is Large ribosomal subunit protein bL19 from Synechococcus sp. (strain JA-2-3B'a(2-13)) (Cyanobacteria bacterium Yellowstone B-Prime).